A 770-amino-acid chain; its full sequence is Molybdenum cofactor sulfurase (770 aa).

K243 carries the N6-(pyridoxal phosphate)lysine modification. Residue C405 is part of the active site. Positions 611–769 constitute an MOSC domain; the sequence is GDEVANWLCQ…LACGDPITVL (159 aa). Residue S726 is modified to Phosphoserine.

It belongs to the class-V pyridoxal-phosphate-dependent aminotransferase family. MOCOS subfamily. Pyridoxal 5'-phosphate serves as cofactor.

The enzyme catalyses Mo-molybdopterin + L-cysteine + AH2 = thio-Mo-molybdopterin + L-alanine + A + H2O. It participates in cofactor biosynthesis; molybdopterin biosynthesis. Sulfurates the molybdenum cofactor. Sulfation of molybdenum is essential for xanthine dehydrogenase (XDH) and aldehyde oxidase (ADO) enzymes in which molybdenum cofactor is liganded by 1 oxygen and 1 sulfur atom in active form. The protein is Molybdenum cofactor sulfurase of Drosophila grimshawi (Hawaiian fruit fly).